The following is a 146-amino-acid chain: Small ribosomal subunit protein eS19 (146 aa).

It belongs to the eukaryotic ribosomal protein eS19 family.

This chain is Small ribosomal subunit protein eS19 (RPS19A), found in Oryza sativa subsp. japonica (Rice).